Reading from the N-terminus, the 56-residue chain is Cytochrome b-c1 complex subunit 10 (56 aa).

Over 1–12 the chain is Mitochondrial matrix; sequence MVTRFLGPRYRE. Residues 13–35 traverse the membrane as a helical segment; sequence LVKNWVPTAYTWGAVGAVGLVWA. At 36-56 the chain is on the mitochondrial intermembrane side; it reads TDWRLILDWVPYINGKFKKDN.

It belongs to the UQCR11/QCR10 family. In terms of assembly, component of the ubiquinol-cytochrome c oxidoreductase (cytochrome b-c1 complex, complex III, CIII), a multisubunit enzyme composed of 11 subunits. The complex is composed of 3 respiratory subunits cytochrome b, cytochrome c1 and Rieske protein UQCRFS1, 2 core protein subunits UQCRC1/QCR1 and UQCRC2/QCR2, and 6 low-molecular weight protein subunits UQCRH/QCR6, UQCRB/QCR7, UQCRQ/QCR8, UQCR10/QCR9, UQCR11/QCR10 and subunit 9, the cleavage product of Rieske protein UQCRFS1. The complex exists as an obligatory dimer and forms supercomplexes (SCs) in the inner mitochondrial membrane with NADH-ubiquinone oxidoreductase (complex I, CI) and cytochrome c oxidase (complex IV, CIV), resulting in different assemblies (supercomplex SCI(1)III(2)IV(1) and megacomplex MCI(2)III(2)IV(2)).

It localises to the mitochondrion inner membrane. In terms of biological role, component of the ubiquinol-cytochrome c oxidoreductase, a multisubunit transmembrane complex that is part of the mitochondrial electron transport chain which drives oxidative phosphorylation. The respiratory chain contains 3 multisubunit complexes succinate dehydrogenase (complex II, CII), ubiquinol-cytochrome c oxidoreductase (cytochrome b-c1 complex, complex III, CIII) and cytochrome c oxidase (complex IV, CIV), that cooperate to transfer electrons derived from NADH and succinate to molecular oxygen, creating an electrochemical gradient over the inner membrane that drives transmembrane transport and the ATP synthase. The cytochrome b-c1 complex catalyzes electron transfer from ubiquinol to cytochrome c, linking this redox reaction to translocation of protons across the mitochondrial inner membrane, with protons being carried across the membrane as hydrogens on the quinol. In the process called Q cycle, 2 protons are consumed from the matrix, 4 protons are released into the intermembrane space and 2 electrons are passed to cytochrome c. QCR10 has a role in CIII assembly and RIP1 stability. This chain is Cytochrome b-c1 complex subunit 10 (UQCR11), found in Homo sapiens (Human).